The sequence spans 261 residues: Phosphatidylglycerol--prolipoprotein diacylglyceryl transferase (261 aa).

The next 4 helical transmembrane spans lie at 17–37 (FGIH…LWLG), 60–80 (ALFY…ALFY), 92–112 (ILFL…VMVA), and 121–141 (GLTF…GLGA). R143 contributes to the a 1,2-diacyl-sn-glycero-3-phospho-(1'-sn-glycerol) binding site. 3 helical membrane passes run 175 to 195 (PSQL…LWWY), 203 to 223 (GSVS…VEFT), and 237 to 257 (LSMG…LLIV).

It belongs to the Lgt family.

It is found in the cell inner membrane. The enzyme catalyses L-cysteinyl-[prolipoprotein] + a 1,2-diacyl-sn-glycero-3-phospho-(1'-sn-glycerol) = an S-1,2-diacyl-sn-glyceryl-L-cysteinyl-[prolipoprotein] + sn-glycerol 1-phosphate + H(+). It functions in the pathway protein modification; lipoprotein biosynthesis (diacylglyceryl transfer). Its function is as follows. Catalyzes the transfer of the diacylglyceryl group from phosphatidylglycerol to the sulfhydryl group of the N-terminal cysteine of a prolipoprotein, the first step in the formation of mature lipoproteins. This chain is Phosphatidylglycerol--prolipoprotein diacylglyceryl transferase, found in Methylobacillus flagellatus (strain ATCC 51484 / DSM 6875 / VKM B-1610 / KT).